Reading from the N-terminus, the 466-residue chain is Heat stress transcription factor A-5 (466 aa).

A DNA-binding region spans residues 21–115 (PAPFLVKTYE…LLKNIHRRKP (95 aa)). Positions 125 to 191 (SSTDQERAVL…KLLNFLETAI (67 aa)) are hydrophobic repeat HR-A/B. The Bipartite nuclear localization signal signature appears at 198–217 (KNFGKKVEQLDISAYNKKRR). Disordered regions lie at residues 215–248 (KRRLPEVEQSKPPSEDSHLDNSSGSSRRESGNIF), 272–300 (HSIQSSNEEGASPKGILSGGDPNTTLTKR), and 422–466 (TERP…QLTL). Positions 218 to 233 (LPEVEQSKPPSEDSHL) are enriched in basic and acidic residues. The AHA signature appears at 414 to 423 (DVFWEQFLTE). Polar residues-rich tracts occupy residues 425–438 (PGSSDNEEASSTYR) and 455–466 (LRNTKNIEQLTL). The Nuclear export signal signature appears at 461–466 (IEQLTL).

This sequence belongs to the HSF family. Class A subfamily. As to quaternary structure, homotrimer. In terms of processing, exhibits temperature-dependent phosphorylation.

The protein resides in the cytoplasm. It is found in the nucleus. Its function is as follows. Transcriptional activator that specifically binds DNA sequence 5'-AGAAnnTTCT-3' known as heat shock promoter elements (HSE). The protein is Heat stress transcription factor A-5 (HSFA5) of Arabidopsis thaliana (Mouse-ear cress).